Reading from the N-terminus, the 396-residue chain is MKKLVILGSTGSIGKSTLSVVEQNKTEYEVFGLVGGKNVELMAAQCLLFQPKFAALDDENAAKALEEQLRQLNVKTEVLSGQKAICELSAHPEVDMVMAAIVGAAGLLPTLSAVKAGKKVLLANKESLVTCGQIFIDEARKSGAQLLPVDSEHNAIFQSLPPDAQQKVGFCPLAELGVSKIILTGSGGPFRVKPLDEFAAITPAQAVAHPNWSMGKKISVDSATMMNKGLEYIEARWLFNASAEEMEIIIHPQSIIHSMVRYIDGSVIAQMGNPDMCTPIAHTMAYPKRINAGVAPLDFFKLKELTFIEPDFARYPNLKLAIDAFAEGQYATTAMNAANEVAVEAFLNERIRFIDIVNVNRTVVENIAPVQVKEIADVLHIDKLARELAEQAVINL.

NADPH is bound by residues threonine 10, glycine 11, serine 12, isoleucine 13, glycine 36, lysine 37, asparagine 38, and asparagine 124. Lysine 125 is a 1-deoxy-D-xylulose 5-phosphate binding site. NADPH is bound at residue glutamate 126. Residue aspartate 150 coordinates Mn(2+). 4 residues coordinate 1-deoxy-D-xylulose 5-phosphate: serine 151, glutamate 152, serine 186, and histidine 209. Residue glutamate 152 coordinates Mn(2+). Glycine 215 is an NADPH binding site. Positions 222, 227, 228, and 231 each coordinate 1-deoxy-D-xylulose 5-phosphate. Residue glutamate 231 coordinates Mn(2+).

The protein belongs to the DXR family. The cofactor is Mg(2+). Mn(2+) serves as cofactor.

The enzyme catalyses 2-C-methyl-D-erythritol 4-phosphate + NADP(+) = 1-deoxy-D-xylulose 5-phosphate + NADPH + H(+). It participates in isoprenoid biosynthesis; isopentenyl diphosphate biosynthesis via DXP pathway; isopentenyl diphosphate from 1-deoxy-D-xylulose 5-phosphate: step 1/6. Catalyzes the NADPH-dependent rearrangement and reduction of 1-deoxy-D-xylulose-5-phosphate (DXP) to 2-C-methyl-D-erythritol 4-phosphate (MEP). The sequence is that of 1-deoxy-D-xylulose 5-phosphate reductoisomerase from Actinobacillus pleuropneumoniae serotype 5b (strain L20).